We begin with the raw amino-acid sequence, 232 residues long: Peptidyl-prolyl cis-trans isomerase CYP26-1 (232 aa).

One can recognise a PPIase cyclophilin-type domain in the interval 7-166 (FFDLTVDGKP…KPVVIADCGE (160 aa)). N108 is a glycosylation site (N-linked (GlcNAc...) asparagine). A helical transmembrane segment spans residues 212–232 (YYLINIVVACMVLMCFWSWFV).

This sequence belongs to the cyclophilin-type PPIase family. As to expression, expressed only in flowers.

The protein localises to the membrane. It catalyses the reaction [protein]-peptidylproline (omega=180) = [protein]-peptidylproline (omega=0). Functionally, PPIases accelerate the folding of proteins. It catalyzes the cis-trans isomerization of proline imidic peptide bonds in oligopeptides. The polypeptide is Peptidyl-prolyl cis-trans isomerase CYP26-1 (CYP26-1) (Arabidopsis thaliana (Mouse-ear cress)).